Reading from the N-terminus, the 301-residue chain is Phosphatidylserine decarboxylase proenzyme (301 aa).

Residues aspartate 117, histidine 173, and serine 260 each act as charge relay system; for autoendoproteolytic cleavage activity in the active site. Serine 260 serves as the catalytic Schiff-base intermediate with substrate; via pyruvic acid; for decarboxylase activity. Serine 260 bears the Pyruvic acid (Ser); by autocatalysis mark.

The protein belongs to the phosphatidylserine decarboxylase family. PSD-B subfamily. Prokaryotic type II sub-subfamily. Heterodimer of a large membrane-associated beta subunit and a small pyruvoyl-containing alpha subunit. Pyruvate is required as a cofactor. Post-translationally, is synthesized initially as an inactive proenzyme. Formation of the active enzyme involves a self-maturation process in which the active site pyruvoyl group is generated from an internal serine residue via an autocatalytic post-translational modification. Two non-identical subunits are generated from the proenzyme in this reaction, and the pyruvate is formed at the N-terminus of the alpha chain, which is derived from the carboxyl end of the proenzyme. The autoendoproteolytic cleavage occurs by a canonical serine protease mechanism, in which the side chain hydroxyl group of the serine supplies its oxygen atom to form the C-terminus of the beta chain, while the remainder of the serine residue undergoes an oxidative deamination to produce ammonia and the pyruvoyl prosthetic group on the alpha chain. During this reaction, the Ser that is part of the protease active site of the proenzyme becomes the pyruvoyl prosthetic group, which constitutes an essential element of the active site of the mature decarboxylase.

Its subcellular location is the cell membrane. The enzyme catalyses a 1,2-diacyl-sn-glycero-3-phospho-L-serine + H(+) = a 1,2-diacyl-sn-glycero-3-phosphoethanolamine + CO2. The protein operates within phospholipid metabolism; phosphatidylethanolamine biosynthesis; phosphatidylethanolamine from CDP-diacylglycerol: step 2/2. Functionally, catalyzes the formation of phosphatidylethanolamine (PtdEtn) from phosphatidylserine (PtdSer). This Chlamydia trachomatis serovar L2b (strain UCH-1/proctitis) protein is Phosphatidylserine decarboxylase proenzyme.